A 775-amino-acid chain; its full sequence is MEFKRIFNTVHDIINRLCQHGYKEYIIPPESTTPVELMEYISTIVSKLKAVTRQDERVYRCCGELIHCRINLRSVSMETWLTSPILCLTPRVRQAIEGRRDEIRRAILEPFLKDQYPALATLGLQSALKYEDFYLTKLEEGKLESLCQFFLRLAATVTTEIVNLPKIATLIPGINDGYTWTDVCRVFFTALACQKIVPATPVMMFLGRETGATASCYLMDPESITVGRAVRAITGDVGTVLQSRGGVGISLQSLNLIPTENQTKGLLAVLKLLDCMVMAINSDCERPTGVCVYIEPWHVDLQTVLATRGMLVRDEIFRCDNIFCCLWTPDLFFERYLSYLKGASNVQWTLFDNRADILRTLHGEAFTSTYLRLEREGLGVSSVPIQDIAFTIIRSAAVTGSPFLMFKDACNRNYHMNTQGNAITGSNLCTEIVQKADAHQHGVCNLASINLTTCLSKGPVSFNLNDLQLTARTTVIFLNGVLAAGNFPCKKSCKGVKNNRSLGIGIQGLHTTCLRLGFDLTSQPARRLNVQIAELMLYETMKTSMEMCKIGGLAPFKGFTESKYAKGWLHQDGFSTISYLDLPWCTLRDDICAYGLYNSQFLALMPTVSSAQVTECSEGFSPIYNNMFSKVTTSGELLRPNLDLMDELRDMYSCEEKRLEVINILEKNQWSVIRSFGCLSNSHPLLKYKTAFEYEQEDLVDMCAERAPFIDQSQSMTLFIEERPDGTIPASKIMNLLIRAYKAGLKTGMYYCKIRKATNSGLFAGGELTCTSCAL.

Residues Thr-200, 215 to 216 (SC), Gly-246, 427 to 431 (NLCTE), and 606 to 610 (PTVSS) each bind substrate. Cysteines 216 and 444 form a disulfide. Asn-427 (proton acceptor) is an active-site residue. The active-site Cysteine radical intermediate is Cys-429. The active-site Proton acceptor is the Glu-431.

Belongs to the ribonucleoside diphosphate reductase large chain family. In terms of assembly, heterotetramer composed of a homodimer of the large subunit (R1) and a homodimer of the small subunit (R2). Larger multisubunit protein complex are also active, composed of (R1)n(R2)n.

It carries out the reaction a 2'-deoxyribonucleoside 5'-diphosphate + [thioredoxin]-disulfide + H2O = a ribonucleoside 5'-diphosphate + [thioredoxin]-dithiol. In terms of biological role, ribonucleoside-diphosphate reductase holoenzyme provides the precursors necessary for viral DNA synthesis. Allows virus growth in non-dividing cells, as well as reactivation from latency in infected hosts. Catalyzes the biosynthesis of deoxyribonucleotides from the corresponding ribonucleotides. The chain is Ribonucleoside-diphosphate reductase large subunit from Homo sapiens (Human).